A 44-amino-acid chain; its full sequence is Photosystem I reaction center subunit IX (44 aa).

Residues 7–27 (YLSVAPVVSTLWFGALAGLLI) traverse the membrane as a helical segment.

This sequence belongs to the PsaJ family.

The protein resides in the plastid. Its subcellular location is the chloroplast thylakoid membrane. Its function is as follows. May help in the organization of the PsaE and PsaF subunits. This is Photosystem I reaction center subunit IX from Glycine max (Soybean).